The sequence spans 302 residues: Acidic endochitinase (302 aa).

Positions 1 to 30 (MTNMTLRKHVIYFLFFISCSLSKPSDASRG) are cleaved as a signal peptide. One can recognise a GH18 domain in the interval 31–302 (GIAIYWGQNG…GYSSSILASV (272 aa)). Disulfide bonds link Cys-49–Cys-96 and Cys-79–Cys-86. The Proton donor role is filled by Glu-156. Residues Cys-188 and Cys-217 are joined by a disulfide bond.

It belongs to the glycosyl hydrolase 18 family. Chitinase class III subfamily.

Its subcellular location is the secreted. It localises to the extracellular space. It catalyses the reaction Random endo-hydrolysis of N-acetyl-beta-D-glucosaminide (1-&gt;4)-beta-linkages in chitin and chitodextrins.. Functionally, this protein functions as a defense against chitin containing fungal pathogens. In Arabidopsis thaliana (Mouse-ear cress), this protein is Acidic endochitinase (CHIB1).